Consider the following 437-residue polypeptide: Minor capsid protein p49 (437 aa).

The protein belongs to the asfivirus p49 structural protein family.

The protein localises to the virion. In terms of biological role, together with the penton and the other minor capsid proteins (M1249L, p17), forms a complicated network immediately below the outer capsid shell, stabilizing the whole capsid. Plays an essential role in the formation of infectious virus particles. Especially required for the formation of the capsid vertices. During virion assembly, associates with the membrane and probably mediates the docking of the penton complex to the inner membrane, where it recruits the capsomers to form the penton core. The polypeptide is Minor capsid protein p49 (Ornithodoros (relapsing fever ticks)).